Consider the following 456-residue polypeptide: Cysteine--tRNA ligase (456 aa).

Residue Cys-28 coordinates Zn(2+). Positions 30 to 40 (MTVYDYCHLGH) match the 'HIGH' region motif. Positions 209, 234, and 238 each coordinate Zn(2+). The 'KMSKS' region signature appears at 266-270 (KMSKS). Lys-269 provides a ligand contact to ATP.

This sequence belongs to the class-I aminoacyl-tRNA synthetase family. In terms of assembly, monomer. It depends on Zn(2+) as a cofactor.

It is found in the cytoplasm. The catalysed reaction is tRNA(Cys) + L-cysteine + ATP = L-cysteinyl-tRNA(Cys) + AMP + diphosphate. The protein is Cysteine--tRNA ligase of Dechloromonas aromatica (strain RCB).